The sequence spans 474 residues: ATP synthase subunit beta, chloroplastic (474 aa).

Residue 155-162 participates in ATP binding; that stretch reads GGAGVGKT.

It belongs to the ATPase alpha/beta chains family. F-type ATPases have 2 components, CF(1) - the catalytic core - and CF(0) - the membrane proton channel. CF(1) has five subunits: alpha(3), beta(3), gamma(1), delta(1), epsilon(1). CF(0) has four main subunits: a(1), b(1), b'(1) and c(9-12).

The protein localises to the plastid. It localises to the chloroplast thylakoid membrane. It carries out the reaction ATP + H2O + 4 H(+)(in) = ADP + phosphate + 5 H(+)(out). In terms of biological role, produces ATP from ADP in the presence of a proton gradient across the membrane. The catalytic sites are hosted primarily by the beta subunits. The polypeptide is ATP synthase subunit beta, chloroplastic (Thalassiosira pseudonana (Marine diatom)).